A 146-amino-acid polypeptide reads, in one-letter code: Minor capsid protein P5 (146 aa).

As to quaternary structure, interacts with the major capsid protein.

It is found in the virion. Its function is as follows. One of the minor capsid proteins that constitute a network internal to the major capsid proteins and outside the lipid membrane. The minor capsid proteins glue and stabilize the capsomers. This is Minor capsid protein P5 from Paramecium bursaria Chlorella virus 1 (PBCV-1).